A 312-amino-acid chain; its full sequence is MSLNVIALGGNAILDTDPTDEGQKAVVNHAAKYIAEFVAKGEQVIVCHGNGPQVGNLLLQQKAGESEKNPALKLDTCVAMTQGSIGYWLQNALTNEFEKRNIAKPVISVVTQVRVDKEDPSFKKPSKPIGPFYTKEEADAEAAKDGSTYVEDAGRGYRKVVPSPMPKEIVEKEAVRALVEADVLTICSGGGGIPVVAEDGQYVGVEAVNDKDFSARVLAENVDADRLIILTGVDNIYINYNQPDQKALEQISVAEAEEYIKEGHFAAGSMLPKIEAALDFVKGDDKRKAIITSIENLENIDKEAGTVISQKG.

This sequence belongs to the carbamate kinase family.

It is found in the cytoplasm. The catalysed reaction is hydrogencarbonate + NH4(+) + ATP = carbamoyl phosphate + ADP + H2O + H(+). The protein operates within metabolic intermediate metabolism; carbamoyl phosphate degradation; CO(2) and NH(3) from carbamoyl phosphate: step 1/1. The protein is Carbamate kinase 2 (arcC2) of Enterococcus faecalis (strain ATCC 700802 / V583).